The primary structure comprises 544 residues: MTPAELKRLYHIIKVQLEYGLDELMPEHQLTKAPLLARKSLFWLKNKHQDKELGHRLRLALQELGPVWIKFGQMMSTRRDLFPPHIADQLALLQDQVAPFDGQLAKRDMEKALGGRLDNWFTDFDIEPLASASIAQVHTAKLKESGREIVLKVIRPDIRPVIDADLKLMHRMARIVAKSLPEARRLKPVEVVHEYEKTLLDELDLRREAANAIQLRRNFEGSEELYVPEVIPDLSSETLMVSERIYGIQVSDIETLEANGTNMKLLAERGVTVFFTQVFRDSFFHADMHPGNVFVNPENPDNPQWIGLDCGIVGTLNSEDKRYLAENLLAFFNRDYRKVAELHVDSGWVPHDTNVNDFEFAIRMVCEPIFAKPLGEISFGHVLLNLFNTARRFNMEVQPQLVLLQKTLLYVEGLGRQLYPQLDLWATAKPFLETWMMNQVGPQAVINAVKERAPFWAEKLPELPELLYDSLRQGKAMNHRMDQLYQGYRDSKRQQATGKFLFGVGATLVVCSAILVSSPYEQLSMGCGIAGVTFWLLSWRAYRR.

The region spanning 123–501 (DFDIEPLASA…KRQQATGKFL (379 aa)) is the Protein kinase domain. Residues 129 to 137 (LASASIAQV) and Lys-152 contribute to the ATP site. Residue Asp-287 is the Proton acceptor of the active site. A helical transmembrane segment spans residues 500–520 (FLFGVGATLVVCSAILVSSPY).

This sequence belongs to the ABC1 family. UbiB subfamily.

It localises to the cell inner membrane. The protein operates within cofactor biosynthesis; ubiquinone biosynthesis [regulation]. In terms of biological role, is probably a protein kinase regulator of UbiI activity which is involved in aerobic coenzyme Q (ubiquinone) biosynthesis. This is Probable protein kinase UbiB from Vibrio atlanticus (strain LGP32) (Vibrio splendidus (strain Mel32)).